We begin with the raw amino-acid sequence, 640 residues long: RNA polymerase II elongation factor ELL2 (640 aa).

3 disordered regions span residues 172–202 (AVSDTVPERKRSTPMNPANTIRKTHSSSTIS), 290–320 (KLNPSQNAAGTSRSESPVCSSRDAVSSPQKR), and 343–490 (RVPP…EEDL). Polar residues-rich tracts occupy residues 184–202 (TPMNPANTIRKTHSSSTIS) and 291–318 (LNPSQNAAGTSRSESPVCSSRDAVSSPQ). Positions 360–372 (AAGLPLPPAAAAI) are enriched in low complexity. Over residues 391 to 401 (IVNSNSNSPST) the composition is skewed to polar residues. The span at 457–470 (MSHKKSKKKSKKHK) shows a compositional bias: basic residues. Positions 471–490 (EKDQIKKHDIETIEEKEEDL) are enriched in basic and acidic residues. 2 positions are modified to phosphoserine: serine 503 and serine 580. The 111-residue stretch at 526-636 (PDYLIKYIAI…LIGEFDQQQA (111 aa)) folds into the OCEL domain.

Belongs to the ELL/occludin family. As to quaternary structure, component of the super elongation complex (SEC), at least composed of EAF1, EAF2, CDK9, MLLT3/AF9, AFF (AFF1 or AFF4), the P-TEFb complex and ELL (ELL, ELL2 or ELL3). Component of the little elongation complex (LEC), at least composed of ELL (ELL, ELL2 or ELL3), ZC3H8, ICE1 and ICE2. Interacts with AFF4; the interaction is direct and leads to stabilize ELL2 and prevent ELL2 ubiquitination. Interacts with EAF1 and EAF2. In terms of processing, ubiquitinated by SIAH1, leading to its degradation by the proteasome. Interaction with AFF4 stabilizes ELL2 and prevents ELL2 ubiquitination.

The protein resides in the nucleus. Functionally, elongation factor component of the super elongation complex (SEC), a complex required to increase the catalytic rate of RNA polymerase II transcription by suppressing transient pausing by the polymerase at multiple sites along the DNA. Component of the little elongation complex (LEC), a complex required to regulate small nuclear RNA (snRNA) gene transcription by RNA polymerase II and III. Plays a role in immunoglobulin secretion in plasma cells: directs efficient alternative mRNA processing, influencing both proximal poly(A) site choice and exon skipping, as well as immunoglobulin heavy chain (IgH) alternative processing. Probably acts by regulating histone modifications accompanying transition from membrane-specific to secretory IgH mRNA expression. The sequence is that of RNA polymerase II elongation factor ELL2 (ELL2) from Homo sapiens (Human).